Here is a 725-residue protein sequence, read N- to C-terminus: Polyribonucleotide nucleotidyltransferase (725 aa).

The Mg(2+) site is built by aspartate 506 and aspartate 512. Residues 571-631 form the KH domain; it reads PLIEQFAIDP…QNIIDACEHI (61 aa). Positions 657-724 constitute an S1 motif domain; it reads DEVVIGKVER…KKDRIELSSA (68 aa).

The protein belongs to the polyribonucleotide nucleotidyltransferase family. Mg(2+) is required as a cofactor.

The protein resides in the cytoplasm. It catalyses the reaction RNA(n+1) + phosphate = RNA(n) + a ribonucleoside 5'-diphosphate. Its function is as follows. Involved in mRNA degradation. Catalyzes the phosphorolysis of single-stranded polyribonucleotides processively in the 3'- to 5'-direction. This is Polyribonucleotide nucleotidyltransferase from Aliarcobacter butzleri (strain RM4018) (Arcobacter butzleri).